The following is a 330-amino-acid chain: MVQSQSLSTLTICGSVKVSSLLRNRLNSVKASSLIGDRCVSCQFLRKSPSFRSHWKSLKQRNLLRVEARWPFQGGGEQGLDPSSERSESANEDILIFFFQLDLATRVQYAMNLEQYDIAQQLREKLTEVEEESIRLQEGKRGSSAKSEAQDKGISIIRLRADLQNAIDSEDYGLAAKLRDEISKLEAESLAVSAKALAFEKAEYAFRLGQKLRHKTFGYRAVVCGMDPICSESSSWMEAAEVEKLPRGSNQPFYQVLVDVRTHPDLLVAYVAEDNLLAPEKPDKERFDHPYISFLYYGADTAGDFIPVKQLREKYNRPRHEVPFDSQDED.

Residues 1-65 (MVQSQSLSTL…KSLKQRNLLR (65 aa)) constitute a chloroplast transit peptide. Residues 66-138 (VEARWPFQGG…VEEESIRLQE (73 aa)) are NTD, required for CLPS1-binding. 2 coiled-coil regions span residues 112-139 (NLEQ…LQEG) and 175-195 (AAKL…VSAK). Residues 153–188 (GISIIRLRADLQNAIDSEDYGLAAKLRDEISKLEAE) form the UVR domain. Residues 203 to 310 (EYAFRLGQKL…TAGDFIPVKQ (108 aa)) form a yccV-like region.

Binds to CLPC1 and CLPC2. Interacts with ClpS1; this interaction stimulates their association with ClpC. Associates with the Clp substrate HEMA1 (GluTR). Expressed constitutively in photosynthetic tissues such as leaves, stems and flowers, and, at low levels, in siliques.

Its subcellular location is the plastid. The protein resides in the chloroplast. Functionally, clp protease adapter that facilitates CLPS1 recruitment to ClpC chaperones thus forming a binary adapter for selective substrate recognition and delivery to plastid Clp protease system (CLPC). This Arabidopsis thaliana (Mouse-ear cress) protein is Clp protease adapter protein ClpF, chloroplastic.